The sequence spans 196 residues: Ribosome maturation factor RimP (196 aa).

The segment at 164–196 (LAPQKPNKPGPKKPGHDKKKPSNEPAAGKPRAE) is disordered. The span at 173–182 (GPKKPGHDKK) shows a compositional bias: basic residues.

The protein belongs to the RimP family.

It is found in the cytoplasm. Functionally, required for maturation of 30S ribosomal subunits. The chain is Ribosome maturation factor RimP from Xanthomonas campestris pv. campestris (strain 8004).